The primary structure comprises 217 residues: Large ribosomal subunit protein uL1 (217 aa).

The protein belongs to the universal ribosomal protein uL1 family. Part of the 50S ribosomal subunit.

Functionally, binds directly to 23S rRNA. Probably involved in E site tRNA release. Protein L1 is also a translational repressor protein, it controls the translation of its operon by binding to its mRNA. This chain is Large ribosomal subunit protein uL1, found in Thermoplasma acidophilum (strain ATCC 25905 / DSM 1728 / JCM 9062 / NBRC 15155 / AMRC-C165).